Here is a 1429-residue protein sequence, read N- to C-terminus: Autophagy-related protein 11 (1429 aa).

Coiled coils occupy residues 540-579 (GDDD…QSQA), 616-808 (EGID…LDDH), 842-985 (TLVE…HMNS), and 1106-1135 (RRIK…LQKD). The tract at residues 574–622 (HRQSQASRPGNLFQPQGSQQRERVNSASSVRSSRFDDRRRSSEGIDPLM) is disordered. Over residues 575 to 592 (RQSQASRPGNLFQPQGSQ) the composition is skewed to polar residues. Over residues 606 to 616 (SRFDDRRRSSE) the composition is skewed to basic and acidic residues. Disordered stretches follow at residues 1205 to 1224 (SKSL…ENDN) and 1333 to 1405 (RAHN…PTRR). 2 stretches are compositionally biased toward polar residues: residues 1206 to 1215 (KSLQPSSETE) and 1333 to 1362 (RAHN…GQKN). Basic and acidic residues predominate over residues 1384–1398 (KADEQPRSVVQREDS).

The protein belongs to the ATG11 family. In terms of assembly, homodimer and potential homooligomers. Interacts with ATG1 kinase and the ATG19 and ATG34 cargo protein transporters. Interacts with ATG9, ATG17 and ATG20.

It is found in the preautophagosomal structure membrane. Its subcellular location is the vacuole membrane. In terms of biological role, involved in cytoplasm to vacuole transport (Cvt), pexophagy, mitophagy and nucleophagy. Recruits mitochondria for their selective degradation via autophagy (mitophagy) during starvation, through its interaction with ATG32. Works as scaffold proteins that recruit ATG proteins to the pre-autophagosome (PAS), the site of vesicle/autophagosome formation. Required for ATG9 anterograde transport from the mitochondria to the PAS. Also recruits the ATG19-prAPE1 complex to the PAS. Required for the Cvt vesicles completion. Autophagy is required for proper vegetative growth, asexual/sexual reproduction, and full virulence. Autophagy is particularly involved in the biosynthesis of deoxynivalenol (DON), an important virulence determinant. This Gibberella zeae (strain ATCC MYA-4620 / CBS 123657 / FGSC 9075 / NRRL 31084 / PH-1) (Wheat head blight fungus) protein is Autophagy-related protein 11.